An 823-amino-acid chain; its full sequence is Leucine--tRNA ligase (823 aa).

The 'HIGH' region motif lies at 42-52 (PYPSGTLHMGH). Positions 575-579 (KMSKS) match the 'KMSKS' region motif. Lys-578 is an ATP binding site.

This sequence belongs to the class-I aminoacyl-tRNA synthetase family.

The protein resides in the cytoplasm. The enzyme catalyses tRNA(Leu) + L-leucine + ATP = L-leucyl-tRNA(Leu) + AMP + diphosphate. The sequence is that of Leucine--tRNA ligase from Legionella pneumophila subsp. pneumophila (strain Philadelphia 1 / ATCC 33152 / DSM 7513).